A 79-amino-acid polypeptide reads, in one-letter code: UPF0154 protein SAG1601 (79 aa).

A helical membrane pass occupies residues 5-25; sequence IWILLIIVALFGGLVGGIFIA.

The protein belongs to the UPF0154 family.

It localises to the membrane. This chain is UPF0154 protein SAG1601, found in Streptococcus agalactiae serotype V (strain ATCC BAA-611 / 2603 V/R).